Consider the following 29-residue polypeptide: Cyclotide psyleio A (29 aa).

The segment at residues 1 to 29 (GLPICGETCFTGTCNTPGCSCTYPICTRD) is a cross-link (cyclopeptide (Gly-Asp)). 3 cysteine pairs are disulfide-bonded: Cys-5-Cys-19, Cys-9-Cys-21, and Cys-14-Cys-26.

Post-translationally, this is a cyclic peptide.

Functionally, probably participates in a plant defense mechanism. This is Cyclotide psyleio A from Psychotria brachyceras.